A 209-amino-acid chain; its full sequence is ATP phosphoribosyltransferase (209 aa).

This sequence belongs to the ATP phosphoribosyltransferase family. Short subfamily. In terms of assembly, heteromultimer composed of HisG and HisZ subunits.

It localises to the cytoplasm. The enzyme catalyses 1-(5-phospho-beta-D-ribosyl)-ATP + diphosphate = 5-phospho-alpha-D-ribose 1-diphosphate + ATP. It functions in the pathway amino-acid biosynthesis; L-histidine biosynthesis; L-histidine from 5-phospho-alpha-D-ribose 1-diphosphate: step 1/9. Functionally, catalyzes the condensation of ATP and 5-phosphoribose 1-diphosphate to form N'-(5'-phosphoribosyl)-ATP (PR-ATP). Has a crucial role in the pathway because the rate of histidine biosynthesis seems to be controlled primarily by regulation of HisG enzymatic activity. The chain is ATP phosphoribosyltransferase from Caldicellulosiruptor bescii (strain ATCC BAA-1888 / DSM 6725 / KCTC 15123 / Z-1320) (Anaerocellum thermophilum).